Reading from the N-terminus, the 519-residue chain is PTS system mannitol-specific EIICB component (519 aa).

The Cytoplasmic portion of the chain corresponds to 1 to 30; it reads MAQTETQEKKGLGRKVQAFGSFLSSMIMPN. Residues 19-351 enclose the PTS EIIC type-2 domain; the sequence is FGSFLSSMIM…MKFTKEPKQD (333 aa). The helical transmembrane segment at 31–52 threads the bilayer; it reads IGAFIAWGFIAAIFIDNGWYPN. Over 53-56 the chain is Extracellular; that stretch reads KELS. A helical transmembrane segment spans residues 57-77; the sequence is QLAGPMITYLIPLLIAFSGGR. The Cytoplasmic portion of the chain corresponds to 78 to 141; the sequence is LIHDLRGGIV…QGFEMLFNNF (64 aa). The helical transmembrane segment at 142 to 163 threads the bilayer; the sequence is SAGILAFIMTILGFKLLAPIMQ. Residues 164–172 lie on the Extracellular side of the membrane; sequence FIMHILSVA. The chain crosses the membrane as a helical span at residues 173 to 193; the sequence is VEFLVHLHLLPIVSIIVEPAK. The Cytoplasmic portion of the chain corresponds to 194-280; sequence ILFLNNAINH…VLMRPLLFIA (87 aa). The chain crosses the membrane as a helical span at residues 281-300; that stretch reads VILGGMTGVATYQATGFGFK. Over 301–320 the chain is Extracellular; the sequence is SPASPGSFIVYCLNAPKGEF. The chain crosses the membrane as a helical span at residues 321–342; it reads LHMVLGVFLAALVSFVVAALIM. At 343-519 the chain is on the cytoplasmic side; that stretch reads KFTKEPKQDL…NNLKKDQDKA (177 aa). The interval 366-406 is disordered; the sequence is KSSVSSKLTGATTGTGAAGVAANKANGEDQNEASSEDEEED. Residues 367-387 are compositionally biased toward low complexity; the sequence is SSVSSKLTGATTGTGAAGVAA. Acidic residues predominate over residues 394 to 406; that stretch reads DQNEASSEDEEED. In terms of domain architecture, PTS EIIB type-2 spans 425–519; sequence DHVIFACDAG…NNLKKDQDKA (95 aa). Cys431 functions as the Phosphocysteine intermediate; for EIIB activity in the catalytic mechanism. Residue Cys431 is modified to Phosphocysteine; by EIIA.

In terms of assembly, homodimer.

Its subcellular location is the cell membrane. The catalysed reaction is D-mannitol(out) + N(pros)-phospho-L-histidyl-[protein] = D-mannitol 1-phosphate(in) + L-histidyl-[protein]. Its function is as follows. The phosphoenolpyruvate-dependent sugar phosphotransferase system (sugar PTS), a major carbohydrate active transport system, catalyzes the phosphorylation of incoming sugar substrates concomitantly with their translocation across the cell membrane. The enzyme II CmtAB PTS system is involved in D-mannitol transport. This Staphylococcus haemolyticus (strain JCSC1435) protein is PTS system mannitol-specific EIICB component (mtlA).